A 120-amino-acid chain; its full sequence is Protein crumbs homolog 3 (120 aa).

The signal sequence occupies residues 1-26 (MANPGLGLLLALGLPFLLARWGRAWG). Residues 27–59 (QIQTTSANENSTVLPSSTSSSSDGNLRPEAITA) are Extracellular-facing. Asparagine 36 carries an N-linked (GlcNAc...) asparagine glycan. Residues 60-80 (IIVVFSLLAALLLAVGLALLV) form a helical membrane-spanning segment. Over 81–120 (RKLREKRQTEGTYRPSSEEQVGARVPPTPNLKLPPEERLI) the chain is Cytoplasmic. Positions 84–120 (REKRQTEGTYRPSSEEQVGARVPPTPNLKLPPEERLI) are interaction with EPB41L5. The segment at 87-120 (RQTEGTYRPSSEEQVGARVPPTPNLKLPPEERLI) is disordered. The segment covering 90 to 99 (EGTYRPSSEE) has biased composition (polar residues). The PDZ-binding motif lies at 117-120 (ERLI).

In terms of assembly, component of a complex composed of CRB3, PALS1 and PATJ. Interacts (via C-terminus) with PALS1 (via PDZ domain). Interacts with PARD6A. Interacts (via intracellular domain) with EPB41L5. Interacts with WDR83. As to expression, preferentially expressed in epithelial tissues. Expressed at high levels in lung, kidney, and colon. Expressed at high levels in retina, colon and mammary glands. Moderately expressed in liver, spleen, pancreas and prostate. Moderately to weakly expressed in the placenta. Weakly expressed in skeletal muscle and small intestine.

Its subcellular location is the apical cell membrane. The protein resides in the cell junction. The protein localises to the tight junction. Involved in the establishment of cell polarity in mammalian epithelial cells. Regulates the morphogenesis of tight junctions. Involved in promoting phosphorylation and cytoplasmic retention of transcriptional coactivators YAP1 and WWTR1/TAZ which leads to suppression of TGFB1-dependent transcription of target genes such as CCN2/CTGF, SERPINE1/PAI1, SNAI1/SNAIL1 and SMAD7. This Homo sapiens (Human) protein is Protein crumbs homolog 3.